The chain runs to 218 residues: Mediator of RNA polymerase II transcription subunit 20 (218 aa).

Belongs to the Mediator complex subunit 20 family. As to quaternary structure, component of the Mediator complex.

Its subcellular location is the nucleus. In terms of biological role, component of the Mediator complex, a coactivator involved in the regulated transcription of nearly all RNA polymerase II-dependent genes. Mediator functions as a bridge to convey information from gene-specific regulatory proteins to the basal RNA polymerase II transcription machinery. Mediator is recruited to promoters by direct interactions with regulatory proteins and serves as a scaffold for the assembly of a functional preinitiation complex with RNA polymerase II and the general transcription factors. The sequence is that of Mediator of RNA polymerase II transcription subunit 20 (MED20) from Anopheles gambiae (African malaria mosquito).